Reading from the N-terminus, the 266-residue chain is 5'-nucleotidase SurE (266 aa).

4 residues coordinate a divalent metal cation: Asp8, Asp9, Ser39, and Asn95.

Belongs to the SurE nucleotidase family. It depends on a divalent metal cation as a cofactor.

It localises to the cytoplasm. The catalysed reaction is a ribonucleoside 5'-phosphate + H2O = a ribonucleoside + phosphate. Functionally, nucleotidase that shows phosphatase activity on nucleoside 5'-monophosphates. This is 5'-nucleotidase SurE from Syntrophus aciditrophicus (strain SB).